The chain runs to 186 residues: Periplasmic nitrate reductase, electron transfer subunit (186 aa).

A signal peptide spans 1–20; sequence MKTSKLNFLTLVASTGLALA. Residues histidine 87, cysteine 102, cysteine 105, histidine 106, histidine 123, cysteine 144, cysteine 147, and histidine 148 each coordinate heme c.

Belongs to the NapB family. In terms of assembly, component of the periplasmic nitrate reductase NapAB complex composed of NapA and NapB. Post-translationally, binds 2 heme C groups per subunit.

It is found in the periplasm. Electron transfer subunit of the periplasmic nitrate reductase complex NapAB. Transfers electrons to NapA subunit, thus allowing electron flow between membrane and periplasm. Essential for periplasmic nitrate reduction with nitrate as the terminal electron acceptor. This Wolinella succinogenes (strain ATCC 29543 / DSM 1740 / CCUG 13145 / JCM 31913 / LMG 7466 / NCTC 11488 / FDC 602W) (Vibrio succinogenes) protein is Periplasmic nitrate reductase, electron transfer subunit.